A 480-amino-acid polypeptide reads, in one-letter code: Probable ATP-dependent RNA helicase DDX49 (480 aa).

The short motif at 2–30 (AGFAEIGLSSWLVEQCRQLGLKQPTPVQL) is the Q motif element. The region spanning 33–207 (IPAILEGRDC…GLATNEPFFW (175 aa)) is the Helicase ATP-binding domain. Residue 46-53 (AKTGSGKT) participates in ATP binding. A DEAD box motif is present at residues 152–155 (DEAD). Residues 218-382 (QLDQRYLLVP…ELVVEEAEVL (165 aa)) form the Helicase C-terminal domain. Residues 438–480 (QQNRRFKEKVGQTLRRQKAGSTVRRSRPPRSRPQEPAQAEAQD) form a disordered region.

Belongs to the DEAD box helicase family. DDX49/DBP8 subfamily.

It localises to the nucleus. It is found in the nucleolus. It carries out the reaction ATP + H2O = ADP + phosphate + H(+). Functionally, ATP-dependent RNA helicase that plays a role in various aspects of RNA metabolism including the regulation of mRNA export and the levels of pre-ribosomal RNA. Regulates the stability and synthesis of pre-ribosomal RNA and thereby regulates cell proliferation. Also possesses antiviral activity by recognizing gammaherpesvirus transcripts in the context of lytic reactivation. The polypeptide is Probable ATP-dependent RNA helicase DDX49 (Ddx49) (Mus musculus (Mouse)).